A 300-amino-acid chain; its full sequence is 3-hydroxy-3-isohexenylglutaryl-CoA/hydroxy-methylglutaryl-CoA lyase (300 aa).

One can recognise a Pyruvate carboxyltransferase domain in the interval 7-274; sequence VRLVEVGPRD…HTGVDMHALV (268 aa). R15 serves as a coordination point for substrate. Positions 16, 207, and 209 each coordinate a divalent metal cation. C240 is a catalytic residue. N249 lines the a divalent metal cation pocket.

The protein belongs to the HMG-CoA lyase family. As to quaternary structure, homodimer. Mg(2+) is required as a cofactor. Mn(2+) serves as cofactor.

The enzyme catalyses 3-hydroxy-3-(4-methylpent-3-en-1-yl)glutaryl-CoA = 7-methyl-3-oxooct-6-enoyl-CoA + acetate. It carries out the reaction (3S)-3-hydroxy-3-methylglutaryl-CoA = acetoacetate + acetyl-CoA. It functions in the pathway metabolic intermediate metabolism; (S)-3-hydroxy-3-methylglutaryl-CoA degradation; acetoacetate from (S)-3-hydroxy-3-methylglutaryl-CoA: step 1/1. In terms of biological role, involved in the L-leucine, isovalerate and acyclic monoterpene catabolism. Catalyzes the cleavage of 3-hydroxy-3-methylglutaryl-CoA (HMG-CoA) to yield acetyl-CoA and acetoacetate. It can also catalyze the cleavage of 3-hydroxy-3-isohexenylglutaryl-CoA (HIHG_CoA) to yield 7-methyl-3-oxooct-6-enoyl-CoA and acetate. This is 3-hydroxy-3-isohexenylglutaryl-CoA/hydroxy-methylglutaryl-CoA lyase from Pseudomonas aeruginosa (strain ATCC 15692 / DSM 22644 / CIP 104116 / JCM 14847 / LMG 12228 / 1C / PRS 101 / PAO1).